Consider the following 810-residue polypeptide: Phenylalanine--tRNA ligase beta subunit (810 aa).

One can recognise a tRNA-binding domain in the interval Arg-39–Gly-150. The B5 domain maps to Arg-407–Glu-495. Positions 473, 479, 482, and 483 each coordinate Mg(2+). In terms of domain architecture, FDX-ACB spans Ser-716–Arg-809.

The protein belongs to the phenylalanyl-tRNA synthetase beta subunit family. Type 1 subfamily. As to quaternary structure, tetramer of two alpha and two beta subunits. It depends on Mg(2+) as a cofactor.

It localises to the cytoplasm. The catalysed reaction is tRNA(Phe) + L-phenylalanine + ATP = L-phenylalanyl-tRNA(Phe) + AMP + diphosphate + H(+). This Synechocystis sp. (strain ATCC 27184 / PCC 6803 / Kazusa) protein is Phenylalanine--tRNA ligase beta subunit (pheT).